Consider the following 450-residue polypeptide: Sorting nexin-4 (450 aa).

The residue at position 1 (M1) is an N-acetylmethionine. Positions 1 to 46 (MEQAPPDPERQLQPAPLEPLGSPDAVLGAAVGKETEGAGEESSGVD) are disordered. Residue S22 is modified to Phosphoserine. The 127-residue stretch at 61-187 (SVSEAEKRTG…YLFLTQEGNW (127 aa)) folds into the PX domain. Residues R106, S108, K132, and R154 each coordinate a 1,2-diacyl-sn-glycero-3-phospho-(1D-myo-inositol-3-phosphate).

This sequence belongs to the sorting nexin family. Heterodimer; heterodimerizes with SNX7 or SNX30. Interacts with WWC1/KIBRA. Identified in a complex with WWC1/KIBRA and dynein components DYNLL1 and DYNC1I2. Interacts with BIN1.

It is found in the early endosome. Its subcellular location is the early endosome membrane. Functionally, involved in the regulation of endocytosis and in several stages of intracellular trafficking. Plays a role in recycling endocytosed transferrin receptor and prevent its degradation. Involved in autophagosome assembly by regulating trafficking and recycling of phospholipid scramblase ATG9A. This Pongo abelii (Sumatran orangutan) protein is Sorting nexin-4.